Reading from the N-terminus, the 444-residue chain is tRNA-2-methylthio-N(6)-dimethylallyladenosine synthase (444 aa).

The MTTase N-terminal domain occupies 2 to 119; that stretch reads KKVYIKTFGC…LPDLIESRKQ (118 aa). 6 residues coordinate [4Fe-4S] cluster: cysteine 11, cysteine 48, cysteine 82, cysteine 156, cysteine 160, and cysteine 163. Residues 142-374 form the Radical SAM core domain; sequence KVDGGAAFVS…NEVIEAKGYA (233 aa). A TRAM domain is found at 377 to 440; the sequence is QSMVGTVQRV…PHSLAGEALT (64 aa).

The protein belongs to the methylthiotransferase family. MiaB subfamily. In terms of assembly, monomer. [4Fe-4S] cluster serves as cofactor.

It localises to the cytoplasm. It carries out the reaction N(6)-dimethylallyladenosine(37) in tRNA + (sulfur carrier)-SH + AH2 + 2 S-adenosyl-L-methionine = 2-methylsulfanyl-N(6)-dimethylallyladenosine(37) in tRNA + (sulfur carrier)-H + 5'-deoxyadenosine + L-methionine + A + S-adenosyl-L-homocysteine + 2 H(+). Functionally, catalyzes the methylthiolation of N6-(dimethylallyl)adenosine (i(6)A), leading to the formation of 2-methylthio-N6-(dimethylallyl)adenosine (ms(2)i(6)A) at position 37 in tRNAs that read codons beginning with uridine. This chain is tRNA-2-methylthio-N(6)-dimethylallyladenosine synthase, found in Chromobacterium violaceum (strain ATCC 12472 / DSM 30191 / JCM 1249 / CCUG 213 / NBRC 12614 / NCIMB 9131 / NCTC 9757 / MK).